A 40-amino-acid polypeptide reads, in one-letter code: Potassium channel toxin alpha-KTx 12.2 (40 aa).

Disulfide bonds link Cys2-Cys5, Cys10-Cys31, Cys16-Cys36, and Cys20-Cys38.

Belongs to the short scorpion toxin superfamily. Potassium channel inhibitor family. Alpha-KTx 12 subfamily. In terms of tissue distribution, expressed by the venom gland.

The protein localises to the secreted. Inhibits high conductance calcium-activated potassium channels. Reversibly inhibits Shaker B potassium channels. In Tityus trivittatus (Argentinean scorpion), this protein is Potassium channel toxin alpha-KTx 12.2.